Reading from the N-terminus, the 283-residue chain is Thymidylate synthase (283 aa).

A dUMP-binding site is contributed by arginine 22. Cysteine 160 (nucleophile) is an active-site residue. Residues 180–183 (RSCD), asparagine 191, and 221–223 (HIY) contribute to the dUMP site. Residue aspartate 183 participates in (6R)-5,10-methylene-5,6,7,8-tetrahydrofolate binding. A (6R)-5,10-methylene-5,6,7,8-tetrahydrofolate-binding site is contributed by serine 282.

Belongs to the thymidylate synthase family. Bacterial-type ThyA subfamily. Homodimer.

The protein resides in the cytoplasm. It catalyses the reaction dUMP + (6R)-5,10-methylene-5,6,7,8-tetrahydrofolate = 7,8-dihydrofolate + dTMP. It functions in the pathway pyrimidine metabolism; dTTP biosynthesis. Functionally, catalyzes the reductive methylation of 2'-deoxyuridine-5'-monophosphate (dUMP) to 2'-deoxythymidine-5'-monophosphate (dTMP) while utilizing 5,10-methylenetetrahydrofolate (mTHF) as the methyl donor and reductant in the reaction, yielding dihydrofolate (DHF) as a by-product. This enzymatic reaction provides an intracellular de novo source of dTMP, an essential precursor for DNA biosynthesis. In Shewanella piezotolerans (strain WP3 / JCM 13877), this protein is Thymidylate synthase.